A 189-amino-acid polypeptide reads, in one-letter code: Ras-like protein rasG (189 aa).

10 to 17 (GGGGVGKS) lines the GTP pocket. The short motif at 32 to 40 (YDPTIEDSY) is the Effector region element. GTP is bound by residues 57–61 (DTAGQ) and 116–119 (NKCD). The disordered stretch occupies residues 169 to 189 (KGDSKPEKGKKKRPLKACTLL). Cys-186 carries the post-translational modification Cysteine methyl ester. Cys-186 is lipidated: S-geranylgeranyl cysteine. A propeptide spans 187–189 (TLL) (removed in mature form).

Belongs to the small GTPase superfamily. Ras family. In terms of assembly, interacts with ripA.

The protein localises to the cell membrane. The catalysed reaction is GTP + H2O = GDP + phosphate + H(+). Alternates between an inactive form bound to GDP and an active form bound to GTP. Activated by a guanine nucleotide-exchange factor (GEF) and inactivated by a GTPase-activating protein (GAP). Ras proteins bind GDP/GTP and possess intrinsic GTPase activity. The chain is Ras-like protein rasG (rasG) from Dictyostelium discoideum (Social amoeba).